The primary structure comprises 159 residues: Small ribosomal subunit protein uS17x (159 aa).

The protein belongs to the universal ribosomal protein uS17 family.

Its subcellular location is the cytoplasm. This chain is Small ribosomal subunit protein uS17x (RPS11C), found in Arabidopsis thaliana (Mouse-ear cress).